We begin with the raw amino-acid sequence, 124 residues long: Small ribosomal subunit protein uS12 (124 aa).

The tract at residues 1–29 is disordered; the sequence is MATINQLVRKGRKRRVAKSNVPALEASPQ. 3-methylthioaspartic acid is present on aspartate 89. The interval 101-124 is disordered; the sequence is AADTAGVDKRRQGRSKYGAKRPKS. The span at 111-124 shows a compositional bias: basic residues; it reads RQGRSKYGAKRPKS.

This sequence belongs to the universal ribosomal protein uS12 family. Part of the 30S ribosomal subunit. Contacts proteins S8 and S17. May interact with IF1 in the 30S initiation complex.

With S4 and S5 plays an important role in translational accuracy. Functionally, interacts with and stabilizes bases of the 16S rRNA that are involved in tRNA selection in the A site and with the mRNA backbone. Located at the interface of the 30S and 50S subunits, it traverses the body of the 30S subunit contacting proteins on the other side and probably holding the rRNA structure together. The combined cluster of proteins S8, S12 and S17 appears to hold together the shoulder and platform of the 30S subunit. The protein is Small ribosomal subunit protein uS12 of Alkalilimnicola ehrlichii (strain ATCC BAA-1101 / DSM 17681 / MLHE-1).